Here is a 274-residue protein sequence, read N- to C-terminus: MINKQLLKKRFNNHAKTYDAYADVQKSMAHQLINQLSTNFFNQEIAILEIGCGTGYLTQLLCKKFPKAAITAVDLSSGMIELAKKKVTEDRVSLICGDIEELSIERQYDLIISNATFQWFNSLHTTIKKLYKQLKPAGSLLFSTFGNGTFQELHSCYSHAKQKLGLFSNSSPGQSFFSLEELSQICEQALVPLREHPFKLSKMEKLEVQYFPTVQAFFTSIKKIGASNSNEESYCQRPSFFRQLINLYENNHRDENGVKVTYHCLMFNITKTNQ.

The protein belongs to the methyltransferase superfamily.

It catalyses the reaction malonyl-[ACP] + S-adenosyl-L-methionine = malonyl-[ACP] methyl ester + S-adenosyl-L-homocysteine. The protein operates within cofactor biosynthesis; biotin biosynthesis. Its function is as follows. Converts the free carboxyl group of a malonyl-thioester to its methyl ester by transfer of a methyl group from S-adenosyl-L-methionine (SAM). It allows to synthesize pimeloyl-ACP via the fatty acid synthetic pathway. The chain is Malonyl-[acyl-carrier protein] O-methyltransferase from Priestia megaterium (strain DSM 319 / IMG 1521) (Bacillus megaterium).